Reading from the N-terminus, the 984-residue chain is Pre-mRNA-splicing factor cwf10 (984 aa).

Residues 1 to 28 form a disordered region; the sequence is MMEEDLYDEFGNYIGPENEEDEEELFPQ. A tr-type G domain is found at 139-402; sequence DDVRSFIVAG…HTLTISDEAE (264 aa). The interval 148–155 is G1; that stretch reads GHLHHGKS. 148-155 is a GTP binding site; sequence GHLHHGKS. The segment at 190-194 is G2; the sequence is VMSIK. Positions 216–219 are G3; that stretch reads DTPG. GTP contacts are provided by residues 216–220 and 270–273; these read DTPGH and NKVD. The interval 270–273 is G4; that stretch reads NKVD. The tract at residues 371-373 is G5; it reads QSL.

Belongs to the TRAFAC class translation factor GTPase superfamily. Classic translation factor GTPase family. EF-G/EF-2 subfamily. As to quaternary structure, belongs to the 40S cdc5-associated complex (or cwf complex), a spliceosome sub-complex reminiscent of a late-stage spliceosome composed of the U2, U5 and U6 snRNAs and at least brr2, cdc5, cwf2/prp3, cwf3/syf1, cwf4/syf3, cwf5/ecm2, spp42/cwf6, cwf7/spf27, cwf8, cwf9, cwf10, cwf11, cwf12, prp45/cwf13, cwf14, cwf15, cwf16, cwf17, cwf18, cwf19, cwf20, cwf21, cwf22, cwf23, cwf24, cwf25, cwf26, cyp7/cwf27, cwf28, cwf29/ist3, lea1, msl1, prp5/cwf1, prp10, prp12/sap130, prp17, prp22, sap61, sap62, sap114, sap145, slu7, smb1, smd1, smd3, smf1, smg1 and syf2.

The protein localises to the cytoplasm. It is found in the nucleus. In terms of biological role, component of the U5 snRNP complex required for pre-mRNA splicing. Binds GTP. The chain is Pre-mRNA-splicing factor cwf10 (cwf10) from Schizosaccharomyces pombe (strain 972 / ATCC 24843) (Fission yeast).